Reading from the N-terminus, the 217-residue chain is MTALSESALMVRAALEERGLETPMTSKVVSREEKKEKIEYHMREILELLSLDLTDDSLMETPHRIAKMYVDEVFSGLDYANFPKITVIENKMKCDEMVRVKGITLTSTCEHHLVTIDGKATVAYIPRGKIIGLSKINRIVRFFAQRPQVQERMTQQILVALQTLLESDDVAVTIDATHYCVKARGVMDATSETTTTALGGIFKRIPATRAEFFHGIR.

Zn(2+) is bound by residues Cys-109, His-112, and Cys-180.

This sequence belongs to the GTP cyclohydrolase I family. In terms of assembly, toroid-shaped homodecamer, composed of two pentamers of five dimers.

It catalyses the reaction GTP + H2O = 7,8-dihydroneopterin 3'-triphosphate + formate + H(+). It functions in the pathway cofactor biosynthesis; 7,8-dihydroneopterin triphosphate biosynthesis; 7,8-dihydroneopterin triphosphate from GTP: step 1/1. In Photobacterium profundum (strain SS9), this protein is GTP cyclohydrolase 1.